Reading from the N-terminus, the 107-residue chain is Putative double-stranded DNA mimic protein Asuc_1259 (107 aa).

It belongs to the putative dsDNA mimic protein family.

Its function is as follows. May act as a double-stranded DNA (dsDNA) mimic. Probably regulates the activity of a dsDNA-binding protein. The sequence is that of Putative double-stranded DNA mimic protein Asuc_1259 from Actinobacillus succinogenes (strain ATCC 55618 / DSM 22257 / CCUG 43843 / 130Z).